A 501-amino-acid polypeptide reads, in one-letter code: Solute carrier family 2, facilitated glucose transporter member 5 (501 aa).

Methionine 1 bears the N-acetylmethionine mark. At 1–18 the chain is on the cytoplasmic side; the sequence is MEPQDPVKREGRLTPVIV. The helical transmembrane segment at 19–39 threads the bilayer; that stretch reads LATLIAAFGSSFQYGYNVAAI. Tyrosine 32 is a D-fructose binding site. The Extracellular segment spans residues 40–68; sequence NSPSEFMKDFYNYTYYDRVGEYMNEFYLT. An N-linked (GlcNAc...) asparagine glycan is attached at asparagine 51. A helical membrane pass occupies residues 69–91; sequence LLWSVTVSMFPFGGFLGSLMVGP. Residues 92–98 lie on the Cytoplasmic side of the membrane; it reads LVNNLGR. The chain crosses the membrane as a helical span at residues 99–119; the sequence is KGTLLFNNIFSIVPALLMGFS. Residues 120–126 are Extracellular-facing; that stretch reads ELAKSFE. The helical transmembrane segment at 127–149 threads the bilayer; the sequence is MIIVARVLVGICAGLSSNVVPMY. The Cytoplasmic portion of the chain corresponds to 150-161; sequence LGELAPKNWRGA. A helical transmembrane segment spans residues 162–182; that stretch reads LGVVPQLFITIGILVAQIFGL. Glutamine 167 contributes to the D-fructose binding site. The Extracellular segment spans residues 183-192; that stretch reads RSLLANEEGW. Residues 193–213 traverse the membrane as a helical segment; that stretch reads PILLGLTGIPAVLQLLFLPFF. Residues 214–277 are Cytoplasmic-facing; sequence PESPRYLLIQ…LFKMRSLRWQ (64 aa). A helical transmembrane segment spans residues 278–298; the sequence is VISIIVLMAGQQLSGVNAIYY. D-fructose-binding positions include glutamine 288 and 296–298; that span reads IYY. The Extracellular segment spans residues 299–313; sequence YADQIYLSAGVNEDD. Residues 314–334 form a helical membrane-spanning segment; sequence VQYVTAGTGAVNVLITVCAIF. Residues 335–342 are Cytoplasmic-facing; the sequence is VVELMGRR. A helical membrane pass occupies residues 343 to 363; the sequence is FLLLLGFSVCFTACCVLTGAL. Over 364-371 the chain is Extracellular; it reads ALQDVISW. The helical transmembrane segment at 372–394 threads the bilayer; sequence MPYVSIACVISYVIGHALGPSPI. Histidine 387 contributes to the D-fructose binding site. The Cytoplasmic segment spans residues 395 to 412; the sequence is PALLVTEIFLQSSRPAAY. A helical membrane pass occupies residues 413-433; it reads MVAGTVHWLSNFTVGLVFPFI. 419–420 lines the D-fructose pocket; that stretch reads HW. Residues 434 to 439 are Extracellular-facing; it reads QVGLGA. A helical membrane pass occupies residues 440–460; the sequence is YSFVIFAVICLLTTVYIFLII. The Cytoplasmic segment spans residues 461–501; sequence PETKSKTFIEINRIFIKMNKVPGVHPEKEELKEFPPSTARQ.

It belongs to the major facilitator superfamily. Sugar transporter (TC 2.A.1.1) family. Glucose transporter subfamily.

The protein localises to the apical cell membrane. Its subcellular location is the cell membrane. The protein resides in the sarcolemma. The enzyme catalyses D-fructose(out) = D-fructose(in). Functionally, functions as a fructose transporter that has only low activity with other monosaccharides. Can mediate the uptake of deoxyglucose, but with low efficiency. Essential for fructose uptake in the small intestine. Plays a role in the regulation of salt uptake and blood pressure in response to dietary fructose. Required for the development of high blood pressure in response to high dietary fructose intake. The polypeptide is Solute carrier family 2, facilitated glucose transporter member 5 (Bos taurus (Bovine)).